A 486-amino-acid polypeptide reads, in one-letter code: Cysteine--tRNA ligase (486 aa).

Residue C30 participates in Zn(2+) binding. The 'HIGH' region signature appears at 32 to 42; the sequence is PTVYDRAHLGN. Zn(2+)-binding residues include C221, H246, and E250. The 'KMSKS' region motif lies at 279–283; the sequence is KMSKS. K282 contributes to the ATP binding site.

The protein belongs to the class-I aminoacyl-tRNA synthetase family. As to quaternary structure, monomer. It depends on Zn(2+) as a cofactor.

It localises to the cytoplasm. The enzyme catalyses tRNA(Cys) + L-cysteine + ATP = L-cysteinyl-tRNA(Cys) + AMP + diphosphate. This is Cysteine--tRNA ligase from Cereibacter sphaeroides (strain ATCC 17025 / ATH 2.4.3) (Rhodobacter sphaeroides).